The primary structure comprises 478 residues: UDP-N-acetylmuramate--L-alanine ligase (478 aa).

126–132 (GTHGKTT) serves as a coordination point for ATP.

This sequence belongs to the MurCDEF family.

It localises to the cytoplasm. It catalyses the reaction UDP-N-acetyl-alpha-D-muramate + L-alanine + ATP = UDP-N-acetyl-alpha-D-muramoyl-L-alanine + ADP + phosphate + H(+). It participates in cell wall biogenesis; peptidoglycan biosynthesis. Its function is as follows. Cell wall formation. In Synechococcus sp. (strain JA-2-3B'a(2-13)) (Cyanobacteria bacterium Yellowstone B-Prime), this protein is UDP-N-acetylmuramate--L-alanine ligase.